The sequence spans 85 residues: Large ribosomal subunit protein bL27 (85 aa).

The disordered stretch occupies residues 1–20 (MATKKAGGSTRNGRDSEAKR).

Belongs to the bacterial ribosomal protein bL27 family.

This is Large ribosomal subunit protein bL27 from Haemophilus influenzae (strain PittEE).